A 462-amino-acid chain; its full sequence is ATP synthase subunit beta (462 aa).

An ATP-binding site is contributed by 149-156; sequence GGAGVGKT.

It belongs to the ATPase alpha/beta chains family. As to quaternary structure, F-type ATPases have 2 components, CF(1) - the catalytic core - and CF(0) - the membrane proton channel. CF(1) has five subunits: alpha(3), beta(3), gamma(1), delta(1), epsilon(1). CF(0) has three main subunits: a(1), b(2) and c(9-12). The alpha and beta chains form an alternating ring which encloses part of the gamma chain. CF(1) is attached to CF(0) by a central stalk formed by the gamma and epsilon chains, while a peripheral stalk is formed by the delta and b chains.

It localises to the cell inner membrane. It carries out the reaction ATP + H2O + 4 H(+)(in) = ADP + phosphate + 5 H(+)(out). In terms of biological role, produces ATP from ADP in the presence of a proton gradient across the membrane. The catalytic sites are hosted primarily by the beta subunits. This Fusobacterium nucleatum subsp. nucleatum (strain ATCC 25586 / DSM 15643 / BCRC 10681 / CIP 101130 / JCM 8532 / KCTC 2640 / LMG 13131 / VPI 4355) protein is ATP synthase subunit beta.